A 122-amino-acid polypeptide reads, in one-letter code: Acidic phospholipase A2 BlatPLA2 (122 aa).

7 cysteine pairs are disulfide-bonded: Cys26–Cys115, Cys28–Cys44, Cys43–Cys95, Cys49–Cys122, Cys50–Cys88, Cys57–Cys81, and Cys75–Cys86. Ca(2+) contacts are provided by Tyr27, Gly29, and Gly31. His47 is a catalytic residue. Asp48 contacts Ca(2+). Residue Asp89 is part of the active site.

It belongs to the phospholipase A2 family. Group II subfamily. D49 sub-subfamily. As to quaternary structure, monomer. Ca(2+) is required as a cofactor. Expressed by the venom gland.

The protein localises to the secreted. The catalysed reaction is a 1,2-diacyl-sn-glycero-3-phosphocholine + H2O = a 1-acyl-sn-glycero-3-phosphocholine + a fatty acid + H(+). Its function is as follows. Acidic phospholipase A2 (PLA2) that only causes a mild edema, when subcutaneously injected in the mice foot. PLA2 catalyzes the calcium-dependent hydrolysis of the 2-acyl groups in 3-sn-phosphoglycerides. The sequence is that of Acidic phospholipase A2 BlatPLA2 from Bothriechis lateralis (Side-striped palm pitviper).